A 115-amino-acid polypeptide reads, in one-letter code: NADH-ubiquinone oxidoreductase chain 3 (115 aa).

3 helical membrane passes run 3-23 (LMLT…IAFW), 55-75 (FFLV…LLPL), and 86-106 (TMLT…AYEW).

It belongs to the complex I subunit 3 family. In terms of assembly, core subunit of respiratory chain NADH dehydrogenase (Complex I) which is composed of 45 different subunits. Interacts with TMEM186. Interacts with TMEM242.

The protein resides in the mitochondrion inner membrane. The catalysed reaction is a ubiquinone + NADH + 5 H(+)(in) = a ubiquinol + NAD(+) + 4 H(+)(out). In terms of biological role, core subunit of the mitochondrial membrane respiratory chain NADH dehydrogenase (Complex I) which catalyzes electron transfer from NADH through the respiratory chain, using ubiquinone as an electron acceptor. Essential for the catalytic activity of complex I. The polypeptide is NADH-ubiquinone oxidoreductase chain 3 (Ceratotherium simum (White rhinoceros)).